The primary structure comprises 651 residues: Probable endo-1,3(4)-beta-glucanase NFIA_089530 (651 aa).

The N-terminal stretch at 1–21 (MAPSSLFLSVGSLIASSLVSA) is a signal peptide. The 254-residue stretch at 36–289 (ESWQGESFIN…WAGNVFAEST (254 aa)) folds into the GH16 domain. N-linked (GlcNAc...) asparagine glycosylation is present at N64. E145 acts as the Nucleophile in catalysis. The active-site Proton donor is the E150. A glycan (N-linked (GlcNAc...) asparagine) is linked at N200. The span at 364–378 (PVPAETTAVPQPAQT) shows a compositional bias: low complexity. 2 disordered regions span residues 364–422 (PVPA…ESTS) and 508–557 (SEIP…PVPA). Composition is skewed to polar residues over residues 379–400 (NTVA…TTVP) and 520–535 (QAVS…TAQG). A compositionally biased stretch (low complexity) spans 542 to 557 (SIASASAAPSTIPVPA). Residue N629 is the site of GPI-anchor amidated asparagine attachment. A propeptide spans 630-651 (GANRMSVGLSGLIGVMFIAALA) (removed in mature form).

Belongs to the glycosyl hydrolase 16 family.

Its subcellular location is the cell membrane. It catalyses the reaction Endohydrolysis of (1-&gt;3)- or (1-&gt;4)-linkages in beta-D-glucans when the glucose residue whose reducing group is involved in the linkage to be hydrolyzed is itself substituted at C-3.. Mixed-linked glucanase involved in the degradation of complex natural cellulosic substrates. This chain is Probable endo-1,3(4)-beta-glucanase NFIA_089530, found in Neosartorya fischeri (strain ATCC 1020 / DSM 3700 / CBS 544.65 / FGSC A1164 / JCM 1740 / NRRL 181 / WB 181) (Aspergillus fischerianus).